Here is a 335-residue protein sequence, read N- to C-terminus: Vitamin B12 import system permease protein BtuC (335 aa).

The next 9 membrane-spanning stretches (helical) occupy residues leucine 25–tryptophan 45, leucine 67–phenylalanine 87, glycine 95–glycine 114, leucine 118–glycine 140, leucine 153–phenylalanine 173, leucine 200–phenylalanine 220, valine 243–isoleucine 263, cysteine 286–phenylalanine 306, and alanine 308–leucine 328.

The protein belongs to the binding-protein-dependent transport system permease family. FecCD subfamily. The complex is composed of two ATP-binding proteins (BtuD), two transmembrane proteins (BtuC) and a solute-binding protein (BtuF).

The protein resides in the cell inner membrane. Part of the ABC transporter complex BtuCDF involved in vitamin B12 import. Involved in the translocation of the substrate across the membrane. This chain is Vitamin B12 import system permease protein BtuC, found in Yersinia enterocolitica serotype O:8 / biotype 1B (strain NCTC 13174 / 8081).